We begin with the raw amino-acid sequence, 1314 residues long: Condensin-2 complex subunit CAP-D3 (1314 aa).

10 HEAT repeats span residues 20-58 (ESDYHELVTDLKSLLDTDDDEILNRFYGSLSSMASSFLR), 98-136 (PIAFLSLLGSIRRYLKRRDDSAGQGSNSQREKGNKKKRG), 184-222 (KSLVQTVSEIPLLALEHSGVLNYDRLMEMCGKILGGVLN), 231-267 (TAAEISKSLTPLLLMGKHQARSFALGFVSRKLMSLAK), 269-310 (NPEL…AMEV), 331-360 (RVLAVDIIPLLISSLGNPLGDISSENGLKD), 361-398 (SWGLGCIDALVQRCSDTSALIRARALSNLAQVVEFLSG), 417-455 (SEGKGAVTDLLKKRCVDEKAAVRRAALLLVTKLTSLMGG), 457-493 (FDGSILKTMGTSCSDPLISIRKAAVSAISEAFRICTD), and 494-532 (EIVTTEWLHSVPRMIMDNETSIQEECENVFHELVLERIL). Positions 116–150 (DDSAGQGSNSQREKGNKKKRGRGKRNLGYEDGEET) are disordered. The span at 130-140 (GNKKKRGRGKR) shows a compositional bias: basic residues. Residues 789-796 (SRRSKRLD) carry the Nuclear localization signal motif. HEAT repeat units lie at residues 821–859 (SADTTKIVPFLHTVITSGNSDSKLKNKLPQANVCLKQKA), 878–916 (GKLAKRYLPLFAQELEKSDCAALRNNLVVAMTDFCVHYT), 917–954 (AMIECYIPKITKRLRDPCEVVRRQTFILLSRLLQRDYV), 956–992 (WRGVLFLRFLLSLVDESEKIRRLADFLFGSILKVKAP), 1053–1091 (QMAPEHLLATFAKLCAEILAAASDGMLNIEDVTGQSVLQ), and 1138–1179 (KGLI…DYKN). 2 disordered regions span residues 1210 to 1237 (MANQGVACGTSHRNGEPEASAASEENVR) and 1265 to 1314 (VNGG…DDES).

In terms of assembly, component of the condensin-2 complex. As to expression, present in buds.

It localises to the nucleus. The protein localises to the chromosome. In terms of biological role, regulatory subunit of the condensin-2 complex, a complex which establishes mitotic chromosome architecture and is involved in physical rigidity of the chromatid axis. May promote the resolution of double-strand DNA catenanes (intertwines) between sister chromatids. Required for plant vigor, fertility, chromatin condensation and sister chromatid cohesion both during mitosis and meiosis. Necessary to maintain normal structural integrity of the meiotic chromosomes during the two nuclear divisions of gametogenesis, especially to prevent interchromosome connections at metaphase I. Seems also involved in crossover formation during meiotic prophase I. Prevents centromeric and pericentromeric heterochromatin repeats association. In Arabidopsis thaliana (Mouse-ear cress), this protein is Condensin-2 complex subunit CAP-D3.